A 150-amino-acid polypeptide reads, in one-letter code: Ribosome maturation factor RimP (150 aa).

It belongs to the RimP family.

Its subcellular location is the cytoplasm. Functionally, required for maturation of 30S ribosomal subunits. This Francisella tularensis subsp. holarctica (strain LVS) protein is Ribosome maturation factor RimP.